A 61-amino-acid chain; its full sequence is Potassium channel toxin alpha-KTx 6.9 (61 aa).

The first 23 residues, 1–23 (MNAKFILLLLVVTTTTLLPDAKG), serve as a signal peptide directing secretion. Disulfide bonds link C29/C50, C35/C55, C39/C57, and C45/C60.

It belongs to the short scorpion toxin superfamily. Potassium channel inhibitor family. Alpha-KTx 06 subfamily. As to expression, expressed by the venom gland.

The protein resides in the secreted. In terms of biological role, inhibits Kv1.2/KCNA2 and Kv1.3/KCNA3 voltage-gated potassium channels. The protein is Potassium channel toxin alpha-KTx 6.9 of Opistophthalmus carinatus (African yellow leg scorpion).